Here is a 277-residue protein sequence, read N- to C-terminus: Acyl-coenzyme A thioesterase MBLAC2 (277 aa).

H80, H82, D84, H85, H167, D186, and H228 together coordinate Zn(2+).

The protein belongs to the metallo-beta-lactamase superfamily. Glyoxalase II family. Zn(2+) is required as a cofactor.

It is found in the endoplasmic reticulum membrane. It localises to the cell membrane. The enzyme catalyses hexadecanoyl-CoA + H2O = hexadecanoate + CoA + H(+). It catalyses the reaction dodecanoyl-CoA + H2O = dodecanoate + CoA + H(+). The catalysed reaction is tetradecanoyl-CoA + H2O = tetradecanoate + CoA + H(+). It carries out the reaction octadecanoyl-CoA + H2O = octadecanoate + CoA + H(+). The enzyme catalyses a beta-lactam + H2O = a substituted beta-amino acid. In terms of biological role, acyl-CoA thioesterases are a group of enzymes that catalyze the hydrolysis of acyl-CoAs to the free fatty acid and coenzyme A (CoASH), providing the potential to regulate intracellular levels of acyl-CoAs, free fatty acids and CoASH. Has an acyl-CoA thioesterase activity towards the long chain fatty acyl-CoA thioester palmitoyl-CoA (hexadecanoyl-CoA; C16:0-CoA). Displays a substrate preference for fatty acyl-CoAs with chain-lengths C12-C18. The chain is Acyl-coenzyme A thioesterase MBLAC2 (MBLAC2) from Gallus gallus (Chicken).